The sequence spans 94 residues: Large ribosomal subunit protein uL29 (94 aa).

The tract at residues 65–94 (ANPGERKSRVFSRAKRKKKNLARLSAKAKG) is disordered. Residues 73-94 (RVFSRAKRKKKNLARLSAKAKG) are compositionally biased toward basic residues.

The protein belongs to the universal ribosomal protein uL29 family.

The sequence is that of Large ribosomal subunit protein uL29 from Leptospira interrogans serogroup Icterohaemorrhagiae serovar copenhageni (strain Fiocruz L1-130).